The sequence spans 306 residues: MPESQSPNSSTNAPVTGTTHVKRGMAEMLKGGVIMDVVTPEQARIAEDAGAVAVMALERVPADIRAQGGVSRMSDPDMIDGIMQAVSIPVMAKARIGHFVEAQILQSLGVDYVDESEVLTPADYANHVDKWAFTVPFVCGATNLGEALRRITEGAAMIRSKGEAGTGDVSNATTHMRGIRTEIRRLQSLPADELYVAAKELQAPYELVREIAETGKLPVVLFTAGGIATPADAAMMMQLGAEGVFVGSGIFKSGNPAERAAAIVKATTFHDDPEVLAKVSRGLGEAMVGINVDQIPQSDRLAERGR.

Aspartate 36 is a binding site for D-ribose 5-phosphate. Lysine 93 acts as the Schiff-base intermediate with D-ribose 5-phosphate in catalysis. Glycine 165 provides a ligand contact to D-ribose 5-phosphate. Arginine 177 provides a ligand contact to D-glyceraldehyde 3-phosphate. Residues glycine 226 and glycine 247–serine 248 contribute to the D-ribose 5-phosphate site.

The protein belongs to the PdxS/SNZ family. In terms of assembly, in the presence of PdxT, forms a dodecamer of heterodimers.

It carries out the reaction aldehydo-D-ribose 5-phosphate + D-glyceraldehyde 3-phosphate + L-glutamine = pyridoxal 5'-phosphate + L-glutamate + phosphate + 3 H2O + H(+). The protein operates within cofactor biosynthesis; pyridoxal 5'-phosphate biosynthesis. In terms of biological role, catalyzes the formation of pyridoxal 5'-phosphate from ribose 5-phosphate (RBP), glyceraldehyde 3-phosphate (G3P) and ammonia. The ammonia is provided by the PdxT subunit. Can also use ribulose 5-phosphate and dihydroxyacetone phosphate as substrates, resulting from enzyme-catalyzed isomerization of RBP and G3P, respectively. The polypeptide is Pyridoxal 5'-phosphate synthase subunit PdxS (Salinispora arenicola (strain CNS-205)).